We begin with the raw amino-acid sequence, 623 residues long: Low affinity potassium transport system protein Kup (623 aa).

The next 12 helical transmembrane spans lie at 9–29, 49–69, 101–121, 137–157, 163–183, 212–232, 247–267, 276–296, 337–357, 363–383, 395–415, and 419–439; these read LPAI…TSPL, VFGF…FKYL, VLVI…VITP, PSLD…LFMI, GMVG…LAVL, AVSF…EALY, WFSV…ALLL, PFFL…ATLA, IYIP…IVSF, LAAA…ILFA, ILVG…FSAN, and LFSG…IMTT.

It belongs to the HAK/KUP transporter (TC 2.A.72) family.

It is found in the cell inner membrane. It catalyses the reaction K(+)(in) + H(+)(in) = K(+)(out) + H(+)(out). Functionally, responsible for the low-affinity transport of potassium into the cell. Likely operates as a K(+):H(+) symporter. This Cronobacter sakazakii (strain ATCC BAA-894) (Enterobacter sakazakii) protein is Low affinity potassium transport system protein Kup.